A 279-amino-acid chain; its full sequence is CDP-paratose synthase (279 aa).

Tyr-115 acts as the Proton acceptor in catalysis.

It belongs to the NAD(P)-dependent epimerase/dehydratase family.

It catalyses the reaction CDP-alpha-D-paratose + NADP(+) = CDP-4-dehydro-3,6-dideoxy-alpha-D-glucose + NADPH + H(+). It functions in the pathway nucleotide-sugar biosynthesis; CDP-3,6-dideoxy-D-mannose biosynthesis; CDP-3,6-dideoxy-D-mannose from CTP and alpha-D-glucose 1-phosphate: step 4/5. In terms of biological role, catalyzes synthesis of paratose and tyvelose, unusual 3,6-dideoxyhexose sugars that form part of the O-antigen in the lipopolysaccharides of several enteric bacteria. In Salmonella typhi, this protein is CDP-paratose synthase (rfbS).